The sequence spans 507 residues: Probable Xaa-Pro aminopeptidase HCBG_01484 (507 aa).

Mn(2+) contacts are provided by Asp283, Asp294, Glu431, and Glu469.

Belongs to the peptidase M24B family. The cofactor is Mn(2+).

It catalyses the reaction Release of any N-terminal amino acid, including proline, that is linked to proline, even from a dipeptide or tripeptide.. Functionally, catalyzes the removal of a penultimate prolyl residue from the N-termini of peptides. The polypeptide is Probable Xaa-Pro aminopeptidase HCBG_01484 (Ajellomyces capsulatus (strain G186AR / H82 / ATCC MYA-2454 / RMSCC 2432) (Darling's disease fungus)).